A 179-amino-acid chain; its full sequence is uncharacterized protein (179 aa).

Its subcellular location is the virion. This is an uncharacterized protein from Acanthamoeba polyphaga (Amoeba).